We begin with the raw amino-acid sequence, 305 residues long: MPTKAKVAIVGSGNISTDLLYKLLRSDWLEPRWMVGIDPQSEGLARARKLGLETTHEGVDWLLAQPEKPDLVFEATSAYVHRDAAPKYEAAGIRAIDLTPAAVGPAVIPPANLRQHLDAPNVNMITCGGQATIPIVFAVSRVVEVPYAEIVASVASVSAGPGTRANIDEFTKTTSRGVETIGGAKRGKAIIILNPADPPMIMRDTIFCAIPEDADRDAIAQSIHDVVKEVQTYVPGYRLLNEPQFDEPSLNSGGQAVVTTFVEVEGAGDYLPPYAGNLDIMTAAATKVGEEIAKETLATTAGGAQ.

An NAD(+)-binding site is contributed by 12–15 (SGNI). The active-site Acyl-thioester intermediate is cysteine 127. NAD(+)-binding positions include 158–166 (SAGPGTRAN) and asparagine 277.

It belongs to the acetaldehyde dehydrogenase family.

The enzyme catalyses acetaldehyde + NAD(+) + CoA = acetyl-CoA + NADH + H(+). This Mycolicibacterium paratuberculosis (strain ATCC BAA-968 / K-10) (Mycobacterium paratuberculosis) protein is Acetaldehyde dehydrogenase.